The primary structure comprises 189 residues: Translation machinery-associated protein 22 (189 aa).

In terms of domain architecture, SUI1 spans 94 to 165 (VTIKRIERNK…EAKDYIEKLL (72 aa)).

It belongs to the DENR family. Interacts with the 40S ribosomal subunit.

It is found in the cytoplasm. The protein is Translation machinery-associated protein 22 (TMA22) of Debaryomyces hansenii (strain ATCC 36239 / CBS 767 / BCRC 21394 / JCM 1990 / NBRC 0083 / IGC 2968) (Yeast).